A 162-amino-acid polypeptide reads, in one-letter code: 2-C-methyl-D-erythritol 2,4-cyclodiphosphate synthase (162 aa).

Residues Asp8 and His10 each coordinate a divalent metal cation. 4-CDP-2-C-methyl-D-erythritol 2-phosphate contacts are provided by residues 8-10 and 36-37; these read DVH and HS. Residue His44 coordinates a divalent metal cation. 4-CDP-2-C-methyl-D-erythritol 2-phosphate-binding positions include 58-60, 63-67, 102-108, 134-137, Phe141, and Arg144; these read DIG, FPDTD, AQAPKMA, and TTTE.

It belongs to the IspF family. In terms of assembly, homotrimer. A divalent metal cation serves as cofactor.

The enzyme catalyses 4-CDP-2-C-methyl-D-erythritol 2-phosphate = 2-C-methyl-D-erythritol 2,4-cyclic diphosphate + CMP. It functions in the pathway isoprenoid biosynthesis; isopentenyl diphosphate biosynthesis via DXP pathway; isopentenyl diphosphate from 1-deoxy-D-xylulose 5-phosphate: step 4/6. Functionally, involved in the biosynthesis of isopentenyl diphosphate (IPP) and dimethylallyl diphosphate (DMAPP), two major building blocks of isoprenoid compounds. Catalyzes the conversion of 4-diphosphocytidyl-2-C-methyl-D-erythritol 2-phosphate (CDP-ME2P) to 2-C-methyl-D-erythritol 2,4-cyclodiphosphate (ME-CPP) with a corresponding release of cytidine 5-monophosphate (CMP). The chain is 2-C-methyl-D-erythritol 2,4-cyclodiphosphate synthase from Yersinia enterocolitica serotype O:8 / biotype 1B (strain NCTC 13174 / 8081).